A 453-amino-acid polypeptide reads, in one-letter code: Pup--protein ligase (453 aa).

E9 lines the Mg(2+) pocket. R53 contributes to the ATP binding site. Y55 is a Mg(2+) binding site. D57 functions as the Proton acceptor in the catalytic mechanism. Mg(2+) is bound at residue E63. 2 residues coordinate ATP: T66 and W420.

The protein belongs to the Pup ligase/Pup deamidase family. Pup-conjugating enzyme subfamily.

It carries out the reaction ATP + [prokaryotic ubiquitin-like protein]-L-glutamate + [protein]-L-lysine = ADP + phosphate + N(6)-([prokaryotic ubiquitin-like protein]-gamma-L-glutamyl)-[protein]-L-lysine.. It functions in the pathway protein degradation; proteasomal Pup-dependent pathway. It participates in protein modification; protein pupylation. Its function is as follows. Catalyzes the covalent attachment of the prokaryotic ubiquitin-like protein modifier Pup to the proteasomal substrate proteins, thereby targeting them for proteasomal degradation. This tagging system is termed pupylation. The ligation reaction involves the side-chain carboxylate of the C-terminal glutamate of Pup and the side-chain amino group of a substrate lysine. The sequence is that of Pup--protein ligase from Kribbella flavida (strain DSM 17836 / JCM 10339 / NBRC 14399).